A 212-amino-acid polypeptide reads, in one-letter code: uncharacterized protein (212 aa).

Residues G53, E74, and D97 each coordinate S-adenosyl-L-methionine.

Belongs to the methyltransferase superfamily. YrrT family.

Its function is as follows. Could be a S-adenosyl-L-methionine-dependent methyltransferase. This is an uncharacterized protein from Bacillus thuringiensis (strain Al Hakam).